The primary structure comprises 358 residues: Fructose-bisphosphate aldolase 2, cytoplasmic (358 aa).

Arginine 39 contacts substrate. Glutamate 183 acts as the Proton acceptor in catalysis. Catalysis depends on lysine 225, which acts as the Schiff-base intermediate with dihydroxyacetone-P. Substrate-binding positions include serine 266–glycine 268 and arginine 298.

It belongs to the class I fructose-bisphosphate aldolase family. As to quaternary structure, homotetramer.

The protein localises to the cytoplasm. The protein resides in the cytosol. It catalyses the reaction beta-D-fructose 1,6-bisphosphate = D-glyceraldehyde 3-phosphate + dihydroxyacetone phosphate. It participates in carbohydrate degradation; glycolysis; D-glyceraldehyde 3-phosphate and glycerone phosphate from D-glucose: step 4/4. In terms of biological role, fructose-bisphosphate aldolase that plays a key role in glycolysis and gluconeogenesis. The protein is Fructose-bisphosphate aldolase 2, cytoplasmic of Oryza sativa subsp. japonica (Rice).